A 465-amino-acid chain; its full sequence is Ribulose bisphosphate carboxylase large chain (465 aa).

The residue at position 4 (Lys-4) is an N6,N6,N6-trimethyllysine. Substrate contacts are provided by Asn-113 and Thr-163. The active-site Proton acceptor is Lys-165. Substrate is bound at residue Lys-167. Positions 191, 193, and 194 each coordinate Mg(2+). Lys-191 is subject to N6-carboxylysine. The active-site Proton acceptor is the His-284. Substrate-binding residues include Arg-285, His-317, and Ser-369.

This sequence belongs to the RuBisCO large chain family. Type I subfamily. Heterohexadecamer of 8 large chains and 8 small chains; disulfide-linked. The disulfide link is formed within the large subunit homodimers. Mg(2+) is required as a cofactor. Post-translationally, the disulfide bond which can form in the large chain dimeric partners within the hexadecamer appears to be associated with oxidative stress and protein turnover.

The protein resides in the plastid. Its subcellular location is the chloroplast. The catalysed reaction is 2 (2R)-3-phosphoglycerate + 2 H(+) = D-ribulose 1,5-bisphosphate + CO2 + H2O. The enzyme catalyses D-ribulose 1,5-bisphosphate + O2 = 2-phosphoglycolate + (2R)-3-phosphoglycerate + 2 H(+). In terms of biological role, ruBisCO catalyzes two reactions: the carboxylation of D-ribulose 1,5-bisphosphate, the primary event in carbon dioxide fixation, as well as the oxidative fragmentation of the pentose substrate in the photorespiration process. Both reactions occur simultaneously and in competition at the same active site. This Cornus florida (Flowering dogwood) protein is Ribulose bisphosphate carboxylase large chain.